Here is a 576-residue protein sequence, read N- to C-terminus: Probable lysosomal cobalamin transporter (576 aa).

The next 10 helical transmembrane spans lie at 8–28 (LIWA…SVFI), 40–60 (VVTF…LLLP), 98–118 (YLLY…VYFW), 145–165 (TISF…VPVA), 188–208 (VLTF…ILYT), 312–332 (LLGG…MLLT), 347–367 (GYIL…VQSA), 377–397 (LTVV…TIGI), 419–439 (LTTA…PMLV), and 503–523 (FFGT…LLVL). The segment at 549-576 (RLLTSSARGVGDTYQSVGGRNNFSTRAG) is disordered. A compositionally biased stretch (polar residues) spans 561 to 576 (TYQSVGGRNNFSTRAG). Asn-570 is a glycosylation site (N-linked (GlcNAc...) asparagine).

The protein belongs to the LIMR family. LMBRD1 subfamily.

The protein resides in the lysosome membrane. Its function is as follows. Probable lysosomal cobalamin transporter. Required to export cobalamin from lysosomes allowing its conversion to cofactors. This Aspergillus niger (strain ATCC MYA-4892 / CBS 513.88 / FGSC A1513) protein is Probable lysosomal cobalamin transporter.